We begin with the raw amino-acid sequence, 672 residues long: MDDFQKAAARARELHRELAHHNYRYYVLDSPEVSDAQYDKLMRELQDLEAKHPSLQTPDSPTQRVGGAAAEEFGEVVHRAPMISLANIFEDQGLTEFDERIRKLVGLPGIAYVCEPKLDGLAIALRYEKGAFVQGATRGDGTTGEDVTSNLRTIRSLPMSLFPQDDVKVPDVLEVRGEVFIRKKDFQKLNEKREEEGEPLFANPRNAAAGSLRQLDPRMTAARPLSVFLYECVPGEGVPVFKTHIEKLEYLKTLGLPINQYRRAEGLEGVRQAYDASLKGRHELPFEVDGMVVKVDDEDQRKRLGQVSKSPRWAVAYKFPPEEESTEVMDIGIQVGRTGALTPVAHLKPVKVGGVTVARATLHNEDELRRKDVRKGDTVFVRRAGDVIPEIVSVVLSKRPADSAPFEFPKHCPVCDAVATKDEDGAIIRCTGASCPAQLVEKIRHFASRLAMDIEGLGDKLAAQLVSTGRVKAFADLYALTKEDLLTLERMGDKSADNLIASLERSKQTTQRRFLYSLGIRHVGDATAKALAEAFPRSEMLFEASLEDISRVKDVGPIMAQVIHTFFQEPQNQEAIRALLAAGVQPAAPQVATGGPFVGKSVVLTGAMTGMTREQAKEEVERRGGKVAGSVSRKTDFVVAGEDAGSKLKKAQELGVRILDEQAFLQMLQTNA.

NAD(+)-binding positions include 35 to 39 (DAQYD), 84 to 85 (SL), and E115. K117 functions as the N6-AMP-lysine intermediate in the catalytic mechanism. 4 residues coordinate NAD(+): R138, E178, K294, and K318. Zn(2+)-binding residues include C412, C415, C430, and C435. Positions 592–672 (ATGGPFVGKS…AFLQMLQTNA (81 aa)) constitute a BRCT domain.

The protein belongs to the NAD-dependent DNA ligase family. LigA subfamily. The cofactor is Mg(2+). Requires Mn(2+) as cofactor.

It catalyses the reaction NAD(+) + (deoxyribonucleotide)n-3'-hydroxyl + 5'-phospho-(deoxyribonucleotide)m = (deoxyribonucleotide)n+m + AMP + beta-nicotinamide D-nucleotide.. In terms of biological role, DNA ligase that catalyzes the formation of phosphodiester linkages between 5'-phosphoryl and 3'-hydroxyl groups in double-stranded DNA using NAD as a coenzyme and as the energy source for the reaction. It is essential for DNA replication and repair of damaged DNA. This Myxococcus xanthus (strain DK1622) protein is DNA ligase.